The primary structure comprises 360 residues: S-adenosylmethionine:tRNA ribosyltransferase-isomerase (360 aa).

The protein belongs to the QueA family. Monomer.

The protein resides in the cytoplasm. The enzyme catalyses 7-aminomethyl-7-carbaguanosine(34) in tRNA + S-adenosyl-L-methionine = epoxyqueuosine(34) in tRNA + adenine + L-methionine + 2 H(+). The protein operates within tRNA modification; tRNA-queuosine biosynthesis. Transfers and isomerizes the ribose moiety from AdoMet to the 7-aminomethyl group of 7-deazaguanine (preQ1-tRNA) to give epoxyqueuosine (oQ-tRNA). This chain is S-adenosylmethionine:tRNA ribosyltransferase-isomerase, found in Rhodopseudomonas palustris (strain BisB5).